The sequence spans 1486 residues: Vacuolar protein sorting/targeting protein 10 (1486 aa).

Positions 1 to 25 (MIVRSLLLAGSLLLASVVPASFTLA) are cleaved as a signal peptide. The Lumenal segment spans residues 26–1349 (KSDGPQIKVK…KKKEFDEKHP (1324 aa)). An N-linked (GlcNAc...) asparagine glycan is attached at asparagine 296. 4 BNR repeats span residues 377-386 (ISFDDGRTFK), 437-447 (FVSNDAGVTWR), 483-493 (YSLNHGKDWKK), and 718-728 (FVTRDHGKTWQ). Residues asparagine 900 and asparagine 965 are each glycosylated (N-linked (GlcNAc...) asparagine). 2 BNR repeats span residues 1100-1110 (YMSRDAGITWH) and 1142-1151 (YSLDEGETWT). A helical membrane pass occupies residues 1350-1370 (GIGGFGLFFAIFFPVAIATGV). Residues 1371-1401 (GYWAFSKWDGKFGRIRLGESQPESIFSRDSP) lie on the Cytoplasmic side of the membrane. A helical membrane pass occupies residues 1402–1422 (LISVPVTIVAGTVAVITALPL). At 1423–1486 (LFSSLWRSFR…EFEGDEEEDV (64 aa)) the chain is on the lumenal side.

Belongs to the VPS10-related sortilin family.

It is found in the golgi apparatus. The protein localises to the trans-Golgi network membrane. It localises to the prevacuolar compartment membrane. Functionally, functions as a sorting receptor in the Golgi compartment required for the intracellular sorting and delivery of soluble vacuolar proteins, like carboxypeptidase Y (CPY) and proteinase A. Executes multiple rounds of sorting by cycling between the late Golgi and a prevacuolar endosome-like compartment. The polypeptide is Vacuolar protein sorting/targeting protein 10 (VPS10) (Arthroderma benhamiae (strain ATCC MYA-4681 / CBS 112371) (Trichophyton mentagrophytes)).